The chain runs to 233 residues: Ribonuclease 3 (233 aa).

One can recognise an RNase III domain in the interval 6-135 (QDYLAKEFNI…FIGALYLDQG (130 aa)). Glu-48 provides a ligand contact to Mg(2+). Residue Asp-52 is part of the active site. Asp-121 and Glu-124 together coordinate Mg(2+). Glu-124 is a catalytic residue. The DRBM domain maps to 161–230 (DAKTSLQEFL…AQQALDNMRN (70 aa)). A disordered region spans residues 205-233 (IGEGKGSSKKHAEMQAAQQALDNMRNKNK).

Belongs to the ribonuclease III family. Homodimer. The cofactor is Mg(2+).

The protein localises to the cytoplasm. The enzyme catalyses Endonucleolytic cleavage to 5'-phosphomonoester.. Digests double-stranded RNA. Involved in the processing of primary rRNA transcript to yield the immediate precursors to the large and small rRNAs (23S and 16S). Processes some mRNAs, and tRNAs when they are encoded in the rRNA operon. Processes pre-crRNA and tracrRNA of type II CRISPR loci if present in the organism. The polypeptide is Ribonuclease 3 (Limosilactobacillus reuteri (strain DSM 20016) (Lactobacillus reuteri)).